Consider the following 254-residue polypeptide: Ferritin, chloroplastic (254 aa).

Residues 1-48 (MALAPSKVSPFSGFSLSDGVGAVRNPTCSVSLSFLNKKVGSRNLGVSA) constitute a chloroplast transit peptide. An extension peptide (EP) region spans residues 49–81 (STVPLTGVIFEPFEEVKKEELAVPTAGQVSLAR). In terms of domain architecture, Ferritin-like diiron spans 82 to 235 (QYYADECESA…EYVAQLRMVG (154 aa)). E99, E134, H137, E183, and Q217 together coordinate Fe cation.

The protein belongs to the ferritin family. Oligomer of 24 subunits. There are two types of subunits: L (light) chain and H (heavy) chain. The major chain can be light or heavy, depending on the species and tissue type. The functional molecule forms a roughly spherical shell with a diameter of 12 nm and contains a central cavity into which the insoluble mineral iron core is deposited.

It localises to the plastid. Its subcellular location is the chloroplast. The enzyme catalyses 4 Fe(2+) + O2 + 4 H(+) = 4 Fe(3+) + 2 H2O. Its function is as follows. Stores iron in a soluble, non-toxic, readily available form. Important for iron homeostasis. Has ferroxidase activity. Iron is taken up in the ferrous form and deposited as ferric hydroxides after oxidation. The chain is Ferritin, chloroplastic (PFE) from Phaseolus vulgaris (Kidney bean).